Reading from the N-terminus, the 545-residue chain is Probable bifunctional tRNA threonylcarbamoyladenosine biosynthesis protein (545 aa).

A kae1 region spans residues 1–329 (MDTSKDLICI…YRSDMVEVNW (329 aa)). H112, H116, and Y133 together coordinate Fe cation. L-threonylcarbamoyladenylate is bound by residues 133 to 137 (YVSGG), D165, G178, E182, and N262. D290 is a Fe cation binding site. One can recognise a Protein kinase domain in the interval 344 to 545 (IIPEHLIGKG…KEVEKRARYL (202 aa)). Residues 350-358 (IGKGAEADI) and K371 contribute to the ATP site. The Proton acceptor; for kinase activity role is filled by D463.

This sequence in the N-terminal section; belongs to the KAE1 / TsaD family. The protein in the C-terminal section; belongs to the protein kinase superfamily. Tyr protein kinase family. BUD32 subfamily. Component of the KEOPS complex that consists of Kae1, Bud32, Cgi121 and Pcc1; the whole complex dimerizes. It depends on Fe(2+) as a cofactor.

The protein resides in the cytoplasm. The enzyme catalyses L-seryl-[protein] + ATP = O-phospho-L-seryl-[protein] + ADP + H(+). It carries out the reaction L-threonyl-[protein] + ATP = O-phospho-L-threonyl-[protein] + ADP + H(+). It catalyses the reaction L-threonylcarbamoyladenylate + adenosine(37) in tRNA = N(6)-L-threonylcarbamoyladenosine(37) in tRNA + AMP + H(+). In terms of biological role, required for the formation of a threonylcarbamoyl group on adenosine at position 37 (t(6)A37) in tRNAs that read codons beginning with adenine. Is a component of the KEOPS complex that is probably involved in the transfer of the threonylcarbamoyl moiety of threonylcarbamoyl-AMP (TC-AMP) to the N6 group of A37. The Kae1 domain likely plays a direct catalytic role in this reaction. The Bud32 domain probably displays kinase activity that regulates Kae1 function. In Methanococcus maripaludis (strain C5 / ATCC BAA-1333), this protein is Probable bifunctional tRNA threonylcarbamoyladenosine biosynthesis protein.